A 660-amino-acid polypeptide reads, in one-letter code: Galactocerebrosidase (660 aa).

An N-terminal signal peptide occupies residues 1–18 (MQTHNFLCIISVILGCSA). 2 residues coordinate substrate: Thr87 and Trp129. Asn147 carries an N-linked (GlcNAc...) asparagine glycan. Asn175 lines the substrate pocket. The active-site Proton donor/acceptor is the Glu176. Glu251 (nucleophile) is an active-site residue. A disulfide bridge connects residues Cys264 and Cys371. Residues Asn293 and Asn356 are each glycosylated (N-linked (GlcNAc...) asparagine). Arg373 lines the substrate pocket. Asn413, Asn465, Asn495, Asn499, Asn537, and Asn578 each carry an N-linked (GlcNAc...) asparagine glycan.

It belongs to the glycosyl hydrolase 59 family.

The protein resides in the lysosome. It carries out the reaction a beta-D-galactosyl-(1&lt;-&gt;1')-N-acylsphing-4-enine + H2O = an N-acylsphing-4-enine + D-galactose. It catalyses the reaction beta-D-galactosyl-(1&lt;-&gt;1)-sphing-4-enine + H2O = sphing-4-enine + D-galactose. The catalysed reaction is a D-galactosylceramide + H2O = an N-acyl-sphingoid base + D-galactose. Its function is as follows. Hydrolyzes the galactose ester bonds of glycolipids such as galactosylceramide and galactosylsphingosine. This Danio rerio (Zebrafish) protein is Galactocerebrosidase.